We begin with the raw amino-acid sequence, 172 residues long: Shikimate kinase (172 aa).

ATP is bound at residue 14–19; that stretch reads GAGKST. Ser-18 serves as a coordination point for Mg(2+). Substrate is bound by residues Asp-36, Arg-60, and Gly-82. Arg-120 contacts ATP. Arg-140 provides a ligand contact to substrate.

The protein belongs to the shikimate kinase family. As to quaternary structure, monomer. The cofactor is Mg(2+).

It localises to the cytoplasm. The catalysed reaction is shikimate + ATP = 3-phosphoshikimate + ADP + H(+). It participates in metabolic intermediate biosynthesis; chorismate biosynthesis; chorismate from D-erythrose 4-phosphate and phosphoenolpyruvate: step 5/7. In terms of biological role, catalyzes the specific phosphorylation of the 3-hydroxyl group of shikimic acid using ATP as a cosubstrate. In Tolumonas auensis (strain DSM 9187 / NBRC 110442 / TA 4), this protein is Shikimate kinase.